We begin with the raw amino-acid sequence, 369 residues long: Glutamate 5-kinase (369 aa).

Lysine 14 is a binding site for ATP. Substrate contacts are provided by serine 54, aspartate 141, and asparagine 153. ATP is bound by residues 173–174 (SD) and 215–221 (TGGMVTK). The PUA domain occupies 277–355 (RGRLHLDPGA…SELATALGPA (79 aa)).

Belongs to the glutamate 5-kinase family.

It is found in the cytoplasm. It catalyses the reaction L-glutamate + ATP = L-glutamyl 5-phosphate + ADP. The protein operates within amino-acid biosynthesis; L-proline biosynthesis; L-glutamate 5-semialdehyde from L-glutamate: step 1/2. Its function is as follows. Catalyzes the transfer of a phosphate group to glutamate to form L-glutamate 5-phosphate. In Salinispora arenicola (strain CNS-205), this protein is Glutamate 5-kinase.